A 433-amino-acid chain; its full sequence is MEYTTQLDAAKKKIITKEMKRVAQKENIDVEILREKIEKGYVVIPANKNHKSLDAHGVGEGLKTKINVNLGISKDCYNIEKEMEKVRVAIDMDAEAIMDLSNYGKTRKFREELIGYSPAMIGSVPMYDCVGMLDKELKDITEEEFLEVVEQHAKDGVDFITIHVGLTRDIAQHLKTTDRITKIVSRGGSLLFAWMIVNNKENPLVTRYDDILEICEKYDVTLSLGDALRPGCINDATDDLQIQELINLSRMAKRAYEKNVQVMIEGPGHVPIDQIEANMKIEKTICNNAPFYVLGPLVTDIAPGYDHITSAIGGAIAASTGADFLCYVTPAEHLRLPNLEDMKEGIIATKIAAHAGDIAKKIPGAKERDDEMSRARFNLDWEKMFELAIDSEKPKKYRKESQPIEEDSCTMCGKMCSMRTVKKVLNGEDVNLI.

Substrate contacts are provided by residues N69, M98, Y127, H163, S185 to G187, D226 to R229, and E265. Residue H269 coordinates Zn(2+). Y292 is a substrate binding site. H333 is a binding site for Zn(2+). [4Fe-4S] cluster is bound by residues C409, C412, and C416.

The protein belongs to the ThiC family. Requires [4Fe-4S] cluster as cofactor.

It catalyses the reaction 5-amino-1-(5-phospho-beta-D-ribosyl)imidazole + S-adenosyl-L-methionine = 4-amino-2-methyl-5-(phosphooxymethyl)pyrimidine + CO + 5'-deoxyadenosine + formate + L-methionine + 3 H(+). Its pathway is cofactor biosynthesis; thiamine diphosphate biosynthesis. Functionally, catalyzes the synthesis of the hydroxymethylpyrimidine phosphate (HMP-P) moiety of thiamine from aminoimidazole ribotide (AIR) in a radical S-adenosyl-L-methionine (SAM)-dependent reaction. This chain is Phosphomethylpyrimidine synthase, found in Finegoldia magna (strain ATCC 29328 / DSM 20472 / WAL 2508) (Peptostreptococcus magnus).